A 203-amino-acid polypeptide reads, in one-letter code: Glycerol-3-phosphate acyltransferase (203 aa).

Helical transmembrane passes span 4-24, 80-100, 117-137, and 139-159; these read MAVT…AVLI, PVLL…PLFF, PIGL…AILF, and YSSL…WMIK.

The protein belongs to the PlsY family. In terms of assembly, probably interacts with PlsX.

It localises to the cell inner membrane. It catalyses the reaction an acyl phosphate + sn-glycerol 3-phosphate = a 1-acyl-sn-glycero-3-phosphate + phosphate. It functions in the pathway lipid metabolism; phospholipid metabolism. Functionally, catalyzes the transfer of an acyl group from acyl-phosphate (acyl-PO(4)) to glycerol-3-phosphate (G3P) to form lysophosphatidic acid (LPA). This enzyme utilizes acyl-phosphate as fatty acyl donor, but not acyl-CoA or acyl-ACP. The sequence is that of Glycerol-3-phosphate acyltransferase from Vibrio vulnificus (strain YJ016).